The primary structure comprises 309 residues: Cutinase (309 aa).

Positions Met-1 to Ala-47 are cleaved as a signal peptide. Ser-178 acts as the Nucleophile in catalysis. Residues Asp-224 and His-256 each act as charge relay system in the active site. Cys-289 and Cys-305 are oxidised to a cystine.

This sequence belongs to the AB hydrolase superfamily.

It is found in the secreted. It carries out the reaction a carboxylic ester + H2O = an alcohol + a carboxylate + H(+). The catalysed reaction is a triacylglycerol + H2O = a diacylglycerol + a fatty acid + H(+). The enzyme catalyses 1,2,3-tri-(9Z-octadecenoyl)-glycerol + H2O = di-(9Z)-octadecenoylglycerol + (9Z)-octadecenoate + H(+). It catalyses the reaction (6-hydroxyhexanoyl)(n) + H2O = (6-hydroxyhexanoyl)(n-1) + 6-hydroxyhexanoate + H(+). It carries out the reaction cutin + H2O = cutin monomers.. No effect on activity by SDS or chelating agents ethylenediaminetetraacetic acid (EDTA) or sodium citrate. No effect on activity by metal ions Ag(+), Ba(2+), Ca(2+), Co(2+), Cu(2+), Mn(2+), Ni(2+), Pb(2+) or Zn(2+). Activated by 1 mM digitonin and sodium deoxycholate, and reducing agents 1 mM 1,4-dithiothreitol, beta-mercaptoethanol and ascorbic acid. Activated by benzene, n-hexane, p-xylene and toluene. Activated by Fe(3+). Inhibited slightly by 1 mM of different chain length fatty acids, and only marginally by 6.0 M urea. Inhibited strongly with chemical modification by reagents phenyl methyl sulfonylfluorid (PMSF), 1-ethyl-3-(3-dimethylaminopropyl) carbodiimide (EDAC), diethylpyrocarbonate (DEPC) and N-bromosuccinimide (NBS). Inhibited by pyridine, DMSO, t-butanol and dodecane. Inhibited by Li(+), Hg(2+) and Mg(2+). No inhibition with chemical modification by reagents N-acetylimidazole (NAI), citraconic anhydride (CA), iodoacetate (IA) and phenylglyoxal (PG). In terms of biological role, catalyzes the hydrolysis of cutin, a polyester that forms the structure of plant cuticle. Shows esterase activity towards p-nitrophenol-linked aliphatic esters (pNP-aliphatic esters). Has a preference for medium chain length (C-4 to C-12) fatty acid esters. Active with p-nitrophenyl palmitate (p-NPP) as substrate. Hydrolyzes triacylglycerol substrates non-specifically with a preference for long, unsaturated fatty acyl chains with the highest activity for triolein. Substrates with cis-9 unsaturation are preferred over the saturated triacylglycerols. Hydrolyzes a wide range of natural oils, especially olive oil, with relatively high activity. Capable of catalyzing synthesis of the flavor ester isoamyl acetate by esterification of isoamyl alcohol using acetic acid as an acyl donor. Degrades synthetic aliphatic polyesters, namely poly(1,4-butylene succinate) extended with 1,6-diisocyanatohexane (PBSc-D) and poly(epsilon-caprolactone) (PCL) plastics. Does not degrade poly(lactic acid) (PLA) nor aromatic poly(ethylene terephthalate) (PET), the most abundant polyester plastic in the world. This Amycolatopsis mediterranei (strain S699) (Nocardia mediterranei) protein is Cutinase.